The sequence spans 193 residues: MATPASAPDTRALVADFVGYKLRQKGYVCGAGPGEGPAADPLHQAMRAAGDEFETRFRRTFSDLAAQLHVTPGSAQQRFTQVSDELFQGGPNWGRLVAFFVFGAALCAESVNKEMEPLVGQVQEWMVAYLETRLADWIHSSGGWAEFTALYGDGALEEARRLREGNWASVRTVLTGAVALGALVTVGAFFASK.

A2 bears the N-acetylalanine mark. The BH4 signature appears at 9–29 (DTRALVADFVGYKLRQKGYVC). The BH1 motif lies at 85–104 (ELFQGGPNWGRLVAFFVFGA). Positions 136–151 (DWIHSSGGWAEFTALY) match the BH2 motif.

The protein belongs to the Bcl-2 family. As to quaternary structure, interacts with HIF3A (via C-terminus domain). Interacts with BOP.

It is found in the mitochondrion membrane. Functionally, promotes cell survival. Blocks dexamethasone-induced apoptosis. Mediates survival of postmitotic Sertoli cells by suppressing death-promoting activity of BAX. This chain is Bcl-2-like protein 2 (BCL2L2), found in Bos taurus (Bovine).